The chain runs to 28 residues: Conotoxin Cl1.2 (28 aa).

Contains 2 disulfide bonds. As to expression, expressed by the venom duct.

The protein localises to the secreted. In Californiconus californicus (California cone), this protein is Conotoxin Cl1.2.